We begin with the raw amino-acid sequence, 201 residues long: Inosine triphosphate pyrophosphatase (201 aa).

16 to 21 (TGNAKK) contacts ITP. Position 44 (E44) interacts with Mg(2+). Residues K56, 72-73 (DT), K89, 148-151 (FGWD), K171, and 176-177 (HR) each bind ITP.

Belongs to the HAM1 NTPase family. As to quaternary structure, homodimer. Requires Mg(2+) as cofactor. The cofactor is Mn(2+).

The protein resides in the cytoplasm. The enzyme catalyses ITP + H2O = IMP + diphosphate + H(+). It carries out the reaction dITP + H2O = dIMP + diphosphate + H(+). It catalyses the reaction XTP + H2O = XMP + diphosphate + H(+). Pyrophosphatase that hydrolyzes non-canonical purine nucleotides such as inosine triphosphate (ITP), deoxyinosine triphosphate (dITP) or xanthosine 5'-triphosphate (XTP) to their respective monophosphate derivatives. The enzyme does not distinguish between the deoxy- and ribose forms. Probably excludes non-canonical purines from RNA and DNA precursor pools, thus preventing their incorporation into RNA and DNA and avoiding chromosomal lesions. The protein is Inosine triphosphate pyrophosphatase of Sorghum bicolor (Sorghum).